The chain runs to 438 residues: GTPase Der (438 aa).

2 consecutive EngA-type G domains span residues proline 4–serine 168 and threonine 177–serine 352. Residues glycine 10–serine 17, aspartate 57–leucine 61, asparagine 120–aspartate 123, glycine 183–serine 190, aspartate 230–leucine 234, and asparagine 295–aspartate 298 contribute to the GTP site. The KH-like domain maps to methionine 353–glycine 437.

It belongs to the TRAFAC class TrmE-Era-EngA-EngB-Septin-like GTPase superfamily. EngA (Der) GTPase family. In terms of assembly, associates with the 50S ribosomal subunit.

Functionally, GTPase that plays an essential role in the late steps of ribosome biogenesis. The sequence is that of GTPase Der from Finegoldia magna (strain ATCC 29328 / DSM 20472 / WAL 2508) (Peptostreptococcus magnus).